The primary structure comprises 90 residues: UPF0213 protein lin0209 (90 aa).

The region spanning 5-80 is the GIY-YIG domain; sequence NEHFFYVLKC…KKLSRKNKDS (76 aa).

This sequence belongs to the UPF0213 family.

The chain is UPF0213 protein lin0209 from Listeria innocua serovar 6a (strain ATCC BAA-680 / CLIP 11262).